Consider the following 438-residue polypeptide: Glutamyl-tRNA reductase (438 aa).

Residues 49-52, serine 109, 114-116, and glutamine 120 contribute to the substrate site; these read TCNR and EGQ. The Nucleophile role is filled by cysteine 50. 198-203 provides a ligand contact to NADP(+); the sequence is GAGRMS.

This sequence belongs to the glutamyl-tRNA reductase family. Homodimer.

The enzyme catalyses (S)-4-amino-5-oxopentanoate + tRNA(Glu) + NADP(+) = L-glutamyl-tRNA(Glu) + NADPH + H(+). It functions in the pathway porphyrin-containing compound metabolism; protoporphyrin-IX biosynthesis; 5-aminolevulinate from L-glutamyl-tRNA(Glu): step 1/2. The protein operates within porphyrin-containing compound metabolism; chlorophyll biosynthesis. In terms of biological role, catalyzes the NADPH-dependent reduction of glutamyl-tRNA(Glu) to glutamate 1-semialdehyde (GSA). In Synechococcus sp. (strain WH7803), this protein is Glutamyl-tRNA reductase.